The sequence spans 369 residues: Anhydro-N-acetylmuramic acid kinase (369 aa).

Position 12 to 19 (12 to 19 (GTSMDGVD)) interacts with ATP.

This sequence belongs to the anhydro-N-acetylmuramic acid kinase family.

It carries out the reaction 1,6-anhydro-N-acetyl-beta-muramate + ATP + H2O = N-acetyl-D-muramate 6-phosphate + ADP + H(+). Its pathway is amino-sugar metabolism; 1,6-anhydro-N-acetylmuramate degradation. It functions in the pathway cell wall biogenesis; peptidoglycan recycling. Catalyzes the specific phosphorylation of 1,6-anhydro-N-acetylmuramic acid (anhMurNAc) with the simultaneous cleavage of the 1,6-anhydro ring, generating MurNAc-6-P. Is required for the utilization of anhMurNAc either imported from the medium or derived from its own cell wall murein, and thus plays a role in cell wall recycling. This is Anhydro-N-acetylmuramic acid kinase from Shewanella halifaxensis (strain HAW-EB4).